Reading from the N-terminus, the 57-residue chain is Large ribosomal subunit protein bL32 (57 aa).

The tract at residues 1–37 is disordered; that stretch reads MAVQQNKPTRSKRGMRRSHDALTAVTSLSVDKTSGEK.

Belongs to the bacterial ribosomal protein bL32 family.

The polypeptide is Large ribosomal subunit protein bL32 (Escherichia fergusonii (strain ATCC 35469 / DSM 13698 / CCUG 18766 / IAM 14443 / JCM 21226 / LMG 7866 / NBRC 102419 / NCTC 12128 / CDC 0568-73)).